The primary structure comprises 189 residues: Fucolectin-5 (189 aa).

An N-terminal signal peptide occupies residues 1-31 (MKTCNLTDRMKVKMIMLLFQILAISTLQSDS). The interval 40–189 (QENVAVRGKA…VEVNALLPAN (150 aa)) is F5/8 type C-like. 3 residues coordinate Ca(2+): aspartate 70, asparagine 72, and serine 81. Disulfide bonds link cysteine 82/cysteine 178, cysteine 114/cysteine 115, and cysteine 140/cysteine 156. The alpha-L-fucose site is built by histidine 84 and arginine 111. The Cell attachment site motif lies at 111 to 113 (RGD). Residue arginine 118 coordinates alpha-L-fucose. Cysteine 178 and glutamate 179 together coordinate Ca(2+).

It belongs to the fucolectin family. In terms of assembly, homotrimer. As to expression, gill mucous cells.

The protein localises to the secreted. Its function is as follows. Acts as a defensive agent. Recognizes blood group fucosylated oligosaccharides including A, B, H and Lewis B-type antigens. Does not recognize Lewis A antigen and has low affinity for monovalent haptens. This Anguilla japonica (Japanese eel) protein is Fucolectin-5.